Here is a 304-residue protein sequence, read N- to C-terminus: Galactose 1-dehydrogenase (304 aa).

The protein belongs to the Gfo/Idh/MocA family. As to quaternary structure, homodimer.

It localises to the cytoplasm. The catalysed reaction is D-galactose + NAD(+) = D-galactono-1,4-lactone + NADH + H(+). The protein operates within carbohydrate metabolism; galactose metabolism. In terms of biological role, catalyzes the dehydrogenation of D-galactose by either NAD(+) or NADP(+). Oxidizes following sugars in decreasing order: D-fucose &gt; D-galactose &gt; L-arabinose &gt; 2-deoxy-D-galactose &gt;&gt; 4-deoxy-D-galactose &gt; 2-deoxy-2-amino-D-galactose. This chain is Galactose 1-dehydrogenase (gal), found in Pseudomonas fluorescens.